The primary structure comprises 61 residues: MKLSALSLAFAIILMMTIMYTKADADASADAEADADAEAEAFWGALLAAAIPAITSAIQGK.

The signal sequence occupies residues Met1–Ala23. Residues Asp24–Ala41 constitute a propeptide that is removed on maturation. Gln59 bears the Glutamine amide mark.

It belongs to the formicidae venom precursor-01 superfamily. Truncated sequences of this peptide have also been found in the venom. It is possible they have been cleaved in the venom. Expressed by the venom gland.

The protein resides in the secreted. Acidic peptide with potent hemolytic activities. It also shows low antimicrobial activities against E.coli (MIC=50uM), as well as histamine-releasing activity (28.3% at 10 uM). Does not have activity against S.aureus, and S.cerevisiae. The polypeptide is U-poneritoxin(01)-Om5b (Odontomachus monticola (Trap-jaw ant)).